The chain runs to 313 residues: MIFSTLEHILTHISFSIVSIVITIHLITFLVDEIVKLYDSSEKGIIVTFFCITGLLVTRWVSSGHFPLSDLYESLIFLSWSFSLIHIIPYFKKNVLILSKITGPSAILTQGFATSGILTEIHQSGILVPALQSEWLIMHVSMMILGYAALLCGSLLSVALLVITFRKNRKLFSKSNVFLNESFFLGENVVENTSFFCTKNYYRSQLIQQLDYWSYRVISLGFTFLTIGILSGAVWANEAWGSYWNWDPKETWAFITWIVFAIYLHTRTNRNLRGPNSAIVASIGFLIIWICYFGVNLLGIGLHSYGSFPSTFN.

8 helical membrane passes run 9–29 (ILTH…LITF), 44–64 (GIIV…VSSG), 71–91 (LYES…IPYF), 111–131 (GFAT…VPAL), 143–163 (MILG…LLVI), 217–237 (VISL…VWAN), 244–264 (WNWD…AIYL), and 278–298 (AIVA…VNLL).

Belongs to the CcmF/CycK/Ccl1/NrfE/CcsA family. May interact with Ccs1.

Its subcellular location is the plastid. It is found in the chloroplast thylakoid membrane. Required during biogenesis of c-type cytochromes (cytochrome c6 and cytochrome f) at the step of heme attachment. This chain is Cytochrome c biogenesis protein CcsA, found in Solanum lycopersicum (Tomato).